We begin with the raw amino-acid sequence, 386 residues long: 3-ketosteroid-9-alpha-monooxygenase, oxygenase component (386 aa).

The Rieske domain occupies 26-128; that stretch reads WHCLGVAKDY…TDVRSGLLFV (103 aa). Residues C67, H69, C86, and H89 each coordinate [2Fe-2S] cluster. Fe cation-binding residues include N175, H181, H186, and D304.

As to quaternary structure, homotrimer. The two-component system 3-ketosteroid-9-alpha-monooxygenase is composed of an oxygenase component KshA and a reductase component KshB. [2Fe-2S] cluster serves as cofactor. The cofactor is Fe cation.

It carries out the reaction androsta-1,4-diene-3,17-dione + 2 reduced [2Fe-2S]-[ferredoxin] + O2 + 2 H(+) = 9alpha-hydroxyandrosta-1,4-diene-3,17-dione + 2 oxidized [2Fe-2S]-[ferredoxin] + H2O. The enzyme catalyses androst-4-ene-3,17-dione + NADH + O2 + H(+) = 9alpha-hydroxy-androst-4-ene-3,17-dione + NAD(+) + H2O. The catalysed reaction is 3-oxochol-4-en-22-oate + NADH + O2 + H(+) = 9alpha-hydroxy-3-oxochol-4-en-22-oate + NAD(+) + H2O. It catalyses the reaction 3-oxochola-1,4-dien-22-oate + NADH + O2 + H(+) = 9alpha-hydroxy-3-oxochola-1,4-dien-22-oate + NAD(+) + H2O. It carries out the reaction 3-oxochol-4-en-22-oyl-CoA + NADH + O2 + H(+) = 9alpha-hydroxy-3-oxochol-4-en-22-oyl-CoA + NAD(+) + H2O. The enzyme catalyses 3-oxochola-1,4-dien-22-oyl-CoA + NADH + O2 + H(+) = 9alpha-hydroxy-3-oxochola-1,4-dien-22-oyl-CoA + NAD(+) + H2O. It functions in the pathway lipid metabolism; steroid biosynthesis. Functionally, involved in the degradation of cholesterol. Catalyzes the introduction of a 9a-hydroxyl moiety into 1,4-androstadiene-3,17-dione (ADD) to yield the 9alpha-hydroxy-1,4-androstadiene-3,17-dione (9OHADD) intermediate which spontaneously form 3-hydroxy-9,10-seconandrost-1,3,5(10)-triene-9,17-dione (HSA) via the meta-cleavage of ring B with concomitant aromatization of ring A. KSH is also able to use 4-androstene-3,17-dione (AD), 3-oxo-23,24-bisnorcholesta-4-en-22-oate (4-BNC), 3-oxo-23,24-bisnorcholesta-1,4-dien-22-oate (1,4-BNC), 3-oxo-23,24-bisnorcholesta-4-en-22-oyl-coenzyme A thioester (4-BNC-CoA) and 3-oxo-23,24-bisnorcholesta-1,4-dien-22-oyl-coenzyme A thioester (1,4-BNC-CoA) as substrates. This is 3-ketosteroid-9-alpha-monooxygenase, oxygenase component (kshA) from Mycobacterium tuberculosis (strain ATCC 25618 / H37Rv).